A 308-amino-acid polypeptide reads, in one-letter code: Membrane protein insertase YidC 1 (308 aa).

A signal peptide spans 1 to 22; it reads MKSIKRFALSAMGAAMLLVLTG. Cys23 carries N-palmitoyl cysteine lipidation. A lipid anchor (S-diacylglycerol cysteine) is attached at Cys23. The next 5 membrane-spanning stretches (helical) occupy residues 60-80, 135-155, 168-188, 211-225, and 230-252; these read FGVAIIIVTIIVRLIILPLGI, FGGVGCFPILLQMPFFSAIYF, YLGIPLGSPSMILVACAGVLY, MIYMSPLMIVVFSLF, and VTLYWVVGGFMMILQQFIVNYIV. The tract at residues 263-308 is disordered; the sequence is ELAKNPSKASAFSTPSGRKDVTPEQPTAITSKKKHKNRNAGKQRSR. Polar residues predominate over residues 269–278; sequence SKASAFSTPS. The span at 293-308 shows a compositional bias: basic residues; the sequence is SKKKHKNRNAGKQRSR.

It belongs to the OXA1/ALB3/YidC family. Type 2 subfamily.

It is found in the cell membrane. In terms of biological role, required for the insertion and/or proper folding and/or complex formation of integral membrane proteins into the membrane. Involved in integration of membrane proteins that insert both dependently and independently of the Sec translocase complex, as well as at least some lipoproteins. This chain is Membrane protein insertase YidC 1, found in Streptococcus pneumoniae (strain ATCC BAA-255 / R6).